Here is a 414-residue protein sequence, read N- to C-terminus: Esterase FrsA (414 aa).

Belongs to the FrsA family.

The catalysed reaction is a carboxylic ester + H2O = an alcohol + a carboxylate + H(+). Catalyzes the hydrolysis of esters. This is Esterase FrsA from Escherichia fergusonii (strain ATCC 35469 / DSM 13698 / CCUG 18766 / IAM 14443 / JCM 21226 / LMG 7866 / NBRC 102419 / NCTC 12128 / CDC 0568-73).